Reading from the N-terminus, the 205-residue chain is MFVSTAFAQTATESQPAPAAGEHGAADAVHTETGVANDAGHGSGVFPPFDSTHYASQILWLAITFGLFYLFMSRVVLPRIGGVIETRRDRIAQDLEQAARLKQDADNAIAAYEQELTQARTKAASIAEAAREKGKGEADAERATAEAALERKLKEAEERIAAIKAKAMNDVGNIAEETTAEIVEQLLGTKADKASVTAAVKASNA.

Residues 1 to 15 (MFVSTAFAQTATESQ) are compositionally biased toward polar residues. The interval 1–26 (MFVSTAFAQTATESQPAPAAGEHGAA) is disordered. Residues 16–26 (PAPAAGEHGAA) show a composition bias toward low complexity. Residues 56–78 (SQILWLAITFGLFYLFMSRVVLP) traverse the membrane as a helical segment.

This sequence belongs to the ATPase B chain family. F-type ATPases have 2 components, F(1) - the catalytic core - and F(0) - the membrane proton channel. F(1) has five subunits: alpha(3), beta(3), gamma(1), delta(1), epsilon(1). F(0) has three main subunits: a(1), b(2) and c(10-14). The alpha and beta chains form an alternating ring which encloses part of the gamma chain. F(1) is attached to F(0) by a central stalk formed by the gamma and epsilon chains, while a peripheral stalk is formed by the delta and b chains.

The protein localises to the cell inner membrane. F(1)F(0) ATP synthase produces ATP from ADP in the presence of a proton or sodium gradient. F-type ATPases consist of two structural domains, F(1) containing the extramembraneous catalytic core and F(0) containing the membrane proton channel, linked together by a central stalk and a peripheral stalk. During catalysis, ATP synthesis in the catalytic domain of F(1) is coupled via a rotary mechanism of the central stalk subunits to proton translocation. Its function is as follows. Component of the F(0) channel, it forms part of the peripheral stalk, linking F(1) to F(0). The sequence is that of ATP synthase subunit b 1 from Brucella anthropi (strain ATCC 49188 / DSM 6882 / CCUG 24695 / JCM 21032 / LMG 3331 / NBRC 15819 / NCTC 12168 / Alc 37) (Ochrobactrum anthropi).